A 410-amino-acid polypeptide reads, in one-letter code: Multifunctional CCA protein (410 aa).

The ATP site is built by Gly-8 and Arg-11. Residues Gly-8 and Arg-11 each contribute to the CTP site. Mg(2+)-binding residues include Glu-21 and Asp-23. ATP is bound by residues Arg-91, Arg-137, and Arg-140. Positions 91, 137, and 140 each coordinate CTP. The region spanning 228–329 (TGIHSLMTLR…VKLLEQVDAF (102 aa)) is the HD domain.

It belongs to the tRNA nucleotidyltransferase/poly(A) polymerase family. Bacterial CCA-adding enzyme type 1 subfamily. In terms of assembly, monomer. Can also form homodimers and oligomers. Requires Mg(2+) as cofactor. Ni(2+) is required as a cofactor.

It carries out the reaction a tRNA precursor + 2 CTP + ATP = a tRNA with a 3' CCA end + 3 diphosphate. The enzyme catalyses a tRNA with a 3' CCA end + 2 CTP + ATP = a tRNA with a 3' CCACCA end + 3 diphosphate. In terms of biological role, catalyzes the addition and repair of the essential 3'-terminal CCA sequence in tRNAs without using a nucleic acid template. Adds these three nucleotides in the order of C, C, and A to the tRNA nucleotide-73, using CTP and ATP as substrates and producing inorganic pyrophosphate. tRNA 3'-terminal CCA addition is required both for tRNA processing and repair. Also involved in tRNA surveillance by mediating tandem CCA addition to generate a CCACCA at the 3' terminus of unstable tRNAs. While stable tRNAs receive only 3'-terminal CCA, unstable tRNAs are marked with CCACCA and rapidly degraded. The protein is Multifunctional CCA protein of Legionella pneumophila subsp. pneumophila (strain Philadelphia 1 / ATCC 33152 / DSM 7513).